We begin with the raw amino-acid sequence, 346 residues long: Annexin A1 (346 aa).

Serine 5 carries the phosphoserine; by TRPM7 modification. An Isoglutamyl lysine isopeptide (Gln-Lys) (interchain with K-?) cross-link involves residue glutamine 19. Tyrosine 21 is subject to Phosphotyrosine; by EGFR. Serine 27 bears the Phosphoserine; by PKC mark. A phosphoserine mark is found at serine 34 and serine 37. Annexin repeat units lie at residues 42-113 (FDAS…ALLK), 114-185 (TPAQ…SLAK), 197-269 (DLAD…AIVK), and 273-344 (STPA…ALCG). Residue lysine 58 is modified to N6-acetyllysine. 11 residues coordinate Ca(2+): glycine 59, valine 60, glutamate 62, lysine 97, leucine 100, glutamate 105, methionine 127, glycine 129, glycine 131, threonine 132, and glutamate 134. Threonine 136 is subject to Phosphothreonine. Residues aspartate 171, glycine 210, and arginine 213 each coordinate Ca(2+). Lysine 214 is covalently cross-linked (Glycyl lysine isopeptide (Lys-Gly) (interchain with G-Cter in SUMO1); alternate). Lysine 214 participates in a covalent cross-link: Glycyl lysine isopeptide (Lys-Gly) (interchain with G-Cter in SUMO2); alternate. Glycine 215 lines the Ca(2+) pocket. Lysine 239 carries the post-translational modification N6-acetyllysine. The Ca(2+) site is built by aspartate 253, glutamate 255, and leucine 256. A Glycyl lysine isopeptide (Lys-Gly) (interchain with G-Cter in SUMO1) cross-link involves residue lysine 257. The Ca(2+) site is built by glutamate 261, methionine 286, glycine 288, and glycine 290. Lysine 312 is subject to N6-acetyllysine. Cysteines 324 and 343 form a disulfide. Residues leucine 328, glutamate 330, and threonine 331 each coordinate Ca(2+). A Glycyl lysine isopeptide (Lys-Gly) (interchain with G-Cter in SUMO1) cross-link involves residue lysine 332. Glutamate 336 is a binding site for Ca(2+).

Belongs to the annexin family. In terms of assembly, homodimer; non-covalently linked. Homodimer; linked by transglutamylation. Homodimers linked by transglutamylation are observed in placenta, but not in other tissues. Interacts with S100A11. Heterotetramer, formed by two molecules each of S100A11 and ANXA1. Interacts with DYSF. Interacts with EGFR. In terms of processing, phosphorylated by protein kinase C, EGFR and TRPM7. Phosphorylated in response to EGF treatment. Sumoylated. Post-translationally, proteolytically cleaved by cathepsin CTSG to release the active N-terminal peptide Ac2-26.

The protein resides in the nucleus. It is found in the cytoplasm. It localises to the cell projection. Its subcellular location is the cilium. The protein localises to the basolateral cell membrane. The protein resides in the lateral cell membrane. It is found in the cell membrane. It localises to the apical cell membrane. Its subcellular location is the membrane. The protein localises to the endosome membrane. The protein resides in the secreted. It is found in the extracellular space. It localises to the early endosome. Its subcellular location is the cytoplasmic vesicle membrane. The protein localises to the extracellular exosome. The protein resides in the cytoplasmic vesicle. It is found in the secretory vesicle lumen. It localises to the phagocytic cup. Its function is as follows. Plays important roles in the innate immune response as effector of glucocorticoid-mediated responses and regulator of the inflammatory process. Has anti-inflammatory activity. Plays a role in glucocorticoid-mediated down-regulation of the early phase of the inflammatory response. Contributes to the adaptive immune response by enhancing signaling cascades that are triggered by T-cell activation, regulates differentiation and proliferation of activated T-cells. Promotes the differentiation of T-cells into Th1 cells and negatively regulates differentiation into Th2 cells. Has no effect on unstimulated T-cells. Negatively regulates hormone exocytosis via activation of the formyl peptide receptors and reorganization of the actin cytoskeleton. Has high affinity for Ca(2+) and can bind up to eight Ca(2+) ions. Displays Ca(2+)-dependent binding to phospholipid membranes. Plays a role in the formation of phagocytic cups and phagosomes. Plays a role in phagocytosis by mediating the Ca(2+)-dependent interaction between phagosomes and the actin cytoskeleton. In terms of biological role, functions at least in part by activating the formyl peptide receptors and downstream signaling cascades. Promotes chemotaxis of granulocytes and monocytes via activation of the formyl peptide receptors. Promotes rearrangement of the actin cytoskeleton, cell polarization and cell migration. Promotes resolution of inflammation and wound healing. Acts via neutrophil N-formyl peptide receptors to enhance the release of CXCL2. The polypeptide is Annexin A1 (ANXA1) (Cavia cutleri (Guinea pig)).